We begin with the raw amino-acid sequence, 268 residues long: Phosphate import ATP-binding protein PstB (268 aa).

An ABC transporter domain is found at 22-263 (LAVRNLNFYY…PKQQQTQDYI (242 aa)). Residue 54-61 (GPSGCGKS) coordinates ATP.

Belongs to the ABC transporter superfamily. Phosphate importer (TC 3.A.1.7) family. In terms of assembly, the complex is composed of two ATP-binding proteins (PstB), two transmembrane proteins (PstC and PstA) and a solute-binding protein (PstS).

The protein localises to the cell inner membrane. It carries out the reaction phosphate(out) + ATP + H2O = ADP + 2 phosphate(in) + H(+). Functionally, part of the ABC transporter complex PstSACB involved in phosphate import. Responsible for energy coupling to the transport system. The protein is Phosphate import ATP-binding protein PstB of Gluconobacter oxydans (strain 621H) (Gluconobacter suboxydans).